Here is a 211-residue protein sequence, read N- to C-terminus: Arginine exporter protein ArgO (211 aa).

The Cytoplasmic segment spans residues M1–M38. The chain crosses the membrane as a helical span at residues I39–G58. The Periplasmic portion of the chain corresponds to S59–M63. A helical membrane pass occupies residues Q64–A91. Topologically, residues M92–E102 are cytoplasmic. Residues V103–F130 traverse the membrane as a helical segment. Residues V131–L140 lie on the Periplasmic side of the membrane. The helical transmembrane segment at D141 to L170 threads the bilayer. Over A171–R173 the chain is Cytoplasmic. The chain crosses the membrane as a helical span at residues L174 to R200. The Periplasmic segment spans residues D201–S211.

Belongs to the LysE/ArgO transporter (TC 2.A.75) family. As to quaternary structure, monomer.

The protein localises to the cell inner membrane. The enzyme catalyses L-arginine(in) = L-arginine(out). Its function is as follows. Involved in the export of arginine. Important to control the intracellular level of arginine and the correct balance between arginine and lysine. May also be involved in the export of canavanine (a plant-derived antimetabolite). The polypeptide is Arginine exporter protein ArgO (Escherichia coli (strain K12)).